The following is a 489-amino-acid chain: Ammonium transporter MEP3 (489 aa).

At 1–17 (MARGDGHLWTETYDSST) the chain is on the extracellular side. Residues 18–38 (VAFMILGAALVFFMVPGLGFL) traverse the membrane as a helical segment. At 39–48 (YSGLARRKSA) the chain is on the cytoplasmic side. Residues 49 to 69 (LALIWVVIMATLVGILQWYFW) traverse the membrane as a helical segment. The Extracellular portion of the chain corresponds to 70–108 (GYSLAFSKTATNNKFIGNLDSFGFRNVYGKISDDSTYPE). Residues 109-129 (LIYAIFQMMFMCVALSIIAGA) form a helical membrane-spanning segment. Residues 130 to 139 (TAERGKLFPH) are Cytoplasmic-facing. A helical transmembrane segment spans residues 140–160 (MVFLFVFATLVYCPITYWIWA). The Extracellular segment spans residues 161–173 (PGGWAYQWGVLDW). A helical transmembrane segment spans residues 174-194 (AGGGNIEILSAVAGFVYSYFL). Residues 195–209 (GRRKENLLINFRPHN) are Cytoplasmic-facing. Residues 210–230 (VSMVTLGTSILWFGWLLFNAA) form a helical membrane-spanning segment. Residues 231-239 (SSLSPNMRS) are Extracellular-facing. The chain crosses the membrane as a helical span at residues 240-260 (VYAFMNTCLSATTGGMTWCLL). The Cytoplasmic segment spans residues 261–267 (DYRSEKK). Residues 268 to 288 (WSTVGLCSGIICGLVAATPSS) form a helical membrane-spanning segment. Position 289 (Gly-289) is a topological domain, extracellular. A helical membrane pass occupies residues 290–310 (CITLYGSLIQGIIAGVVCNFA). Residues 311–330 (TKIKYYLKVDDSLDLLAEHG) lie on the Cytoplasmic side of the membrane. A helical membrane pass occupies residues 331–351 (IAGVVGLIFNALFAADWVIGM). At 352-372 (DGTTKHKGGWLTHNWKQMYIQ) the chain is on the extracellular side. Residues 373–393 (IAYIGASAGYCAVVTAIICFV) traverse the membrane as a helical segment. Over 394 to 489 (LGKIPGVHLR…NPKLHHAKEA (96 aa)) the chain is Cytoplasmic. The span at 448-481 (GANSASETNPTEDSQNSSLSSATVSGQNEKSNNP) shows a compositional bias: polar residues. Residues 448–489 (GANSASETNPTEDSQNSSLSSATVSGQNEKSNNPKLHHAKEA) are disordered.

This sequence belongs to the ammonia transporter channel (TC 1.A.11.2) family.

It localises to the membrane. In terms of biological role, transporter for ammonium (both charged and uncharged NH3 and NH4) to use as a nitrogen source. The affinity of MEP2 is about twenty times higher than that of MEP1. MEP3 has the lowest affinity. This is Ammonium transporter MEP3 (MEP3) from Saccharomyces cerevisiae (strain ATCC 204508 / S288c) (Baker's yeast).